The following is a 526-amino-acid chain: GMP synthase [glutamine-hydrolyzing] (526 aa).

The region spanning 10–208 (RILILDFGSQ…VVDLCGCEKL (199 aa)) is the Glutamine amidotransferase type-1 domain. Catalysis depends on Cys87, which acts as the Nucleophile. Active-site residues include His182 and Glu184. The GMPS ATP-PPase domain occupies 209–401 (WTTENIIDDS…LGLPSDMVYR (193 aa)). Residue 236 to 242 (SGGVDSS) participates in ATP binding.

As to quaternary structure, homodimer.

The catalysed reaction is XMP + L-glutamine + ATP + H2O = GMP + L-glutamate + AMP + diphosphate + 2 H(+). Its pathway is purine metabolism; GMP biosynthesis; GMP from XMP (L-Gln route): step 1/1. In terms of biological role, catalyzes the synthesis of GMP from XMP. The chain is GMP synthase [glutamine-hydrolyzing] from Hydrogenovibrio crunogenus (strain DSM 25203 / XCL-2) (Thiomicrospira crunogena).